The sequence spans 232 residues: Thiamine import ATP-binding protein ThiQ (232 aa).

Residues 2-230 (LKLTDITWLY…KASASAILGI (229 aa)) form the ABC transporter domain. 32-39 (GPSGAGKS) is an ATP binding site.

Belongs to the ABC transporter superfamily. Thiamine importer (TC 3.A.1.19.1) family. As to quaternary structure, the complex is composed of two ATP-binding proteins (ThiQ), two transmembrane proteins (ThiP) and a solute-binding protein (ThiB).

It localises to the cell inner membrane. The enzyme catalyses thiamine(out) + ATP + H2O = thiamine(in) + ADP + phosphate + H(+). In terms of biological role, part of the ABC transporter complex ThiBPQ involved in thiamine import. Responsible for energy coupling to the transport system. This Shigella boydii serotype 4 (strain Sb227) protein is Thiamine import ATP-binding protein ThiQ.